Consider the following 215-residue polypeptide: 3-demethoxyubiquinol 3-hydroxylase (215 aa).

Fe cation contacts are provided by Glu64, Glu94, His97, Glu146, Glu178, and His181.

The protein belongs to the COQ7 family. Requires Fe cation as cofactor.

Its subcellular location is the cell membrane. It carries out the reaction a 5-methoxy-2-methyl-3-(all-trans-polyprenyl)benzene-1,4-diol + AH2 + O2 = a 3-demethylubiquinol + A + H2O. It participates in cofactor biosynthesis; ubiquinone biosynthesis. Its function is as follows. Catalyzes the hydroxylation of 2-nonaprenyl-3-methyl-6-methoxy-1,4-benzoquinol during ubiquinone biosynthesis. The polypeptide is 3-demethoxyubiquinol 3-hydroxylase (Pseudomonas putida (strain W619)).